A 378-amino-acid chain; its full sequence is 1-acyl-sn-glycerol-3-phosphate acyltransferase delta (378 aa).

A helical membrane pass occupies residues 11–31 (FLCHLVFCYVFIASGLIVNAI). The HXXXXD motif motif lies at 96–101 (HKFEID). Transmembrane regions (helical) follow at residues 125-145 (ELAY…IFCT), 311-331 (WLFW…SMVS), and 338-358 (LASL…MIGV).

It belongs to the 1-acyl-sn-glycerol-3-phosphate acyltransferase family.

The protein resides in the endoplasmic reticulum membrane. It catalyses the reaction a 1-acyl-sn-glycero-3-phosphate + an acyl-CoA = a 1,2-diacyl-sn-glycero-3-phosphate + CoA. The catalysed reaction is (4Z,7Z,10Z,13Z,16Z,19Z)-docosahexaenoyl-CoA + 1-hexadecanoyl-sn-glycero-3-phosphate = 1-hexadecanoyl-2-(4Z,7Z,10Z,13Z,16Z,19Z-docosahexaenoyl)-sn-glycero-3-phosphate + CoA. The enzyme catalyses 1-octadecanoyl-sn-glycero-3-phosphate + (9Z,12Z)-octadecadienoyl-CoA = 1-octadecanoyl-2-(9Z,12Z-octadecadienoyl)-sn-glycero-3-phosphate + CoA. It carries out the reaction 1-octadecanoyl-sn-glycero-3-phosphate + (4Z,7Z,10Z,13Z,16Z,19Z)-docosahexaenoyl-CoA = 1-octadecanoyl-2-(4Z,7Z,10Z,13Z,16Z,19Z-docosahexaenoyl)-sn-glycero-3-phosphate + CoA. It catalyses the reaction (4Z,7Z,10Z,13Z,16Z,19Z)-docosahexaenoyl-CoA + 1-(9Z-octadecenoyl)-sn-glycero-3-phosphate = 1-(9Z-octadecenoyl)-2-(4Z,7Z,10Z,13Z,16Z,19Z-docosahexaenoyl)-sn-glycero-3-phosphate + CoA. It functions in the pathway phospholipid metabolism; CDP-diacylglycerol biosynthesis; CDP-diacylglycerol from sn-glycerol 3-phosphate: step 2/3. Converts 1-acyl-sn-glycerol-3-phosphate (lysophosphatidic acid or LPA) into 1,2-diacyl-sn-glycerol-3-phosphate (phosphatidic acid or PA) by incorporating an acyl moiety at the sn-2 position of the glycerol backbone. Exhibits high acyl-CoA specificity for polyunsaturated fatty acyl-CoA, especially docosahexaenoyl-CoA (22:6-CoA, DHA-CoA). The protein is 1-acyl-sn-glycerol-3-phosphate acyltransferase delta (Agpat4) of Rattus norvegicus (Rat).